The sequence spans 214 residues: Redox-sensing transcriptional repressor Rex (214 aa).

The segment at residues 16-55 is a DNA-binding region (H-T-H motif); sequence LYYRYLIFLNDEGKEKVSSTELAEAVQVDSASIRRDFSYF. Residue 90 to 95 participates in NAD(+) binding; the sequence is GVGNMG.

It belongs to the transcriptional regulatory Rex family. As to quaternary structure, homodimer.

It is found in the cytoplasm. Functionally, modulates transcription in response to changes in cellular NADH/NAD(+) redox state. The sequence is that of Redox-sensing transcriptional repressor Rex from Lactobacillus gasseri (strain ATCC 33323 / DSM 20243 / BCRC 14619 / CIP 102991 / JCM 1131 / KCTC 3163 / NCIMB 11718 / NCTC 13722 / AM63).